Reading from the N-terminus, the 1784-residue chain is MVKLANPLYTEWILEAIQKIKKQKQRPSEERICHAVSTSHGLDKKTVSEQLELSVQDGSVLKVTNKGLASYKDPDNPGRFSSVKPGTFPKSTKESRGSCNDLRNVDWNKLLRRAIEGLEEPNGSSLKNIEKYLRSQSDLTSTTNNPAFQQRLRLGAKRAVNNGRLLKDGPQYRVNYGSLDGKGAPQYPSAFPSSLPPVSLLPHEKDQPRADPIPICSFCLGTKESNREKKPEELLSCADCGSSGHPSCLKFCPELTTNVKALRWQCIECKTCSACRVQGRNADNMLFCDSCDRGFHMECCDPPLSRMPKGMWICQVCRPKKKGRKLLHEKAAQIKRRYAKPIGRPKNKLKQRLLSVTSDEGSMNAFTGRGSPDTEIKINIKQESADVNVIGNKDVVTEEDLDVFKQAQELSWEKIECESGVEDCGRYPSVIEFGKYEIQTWYSSPYPQEYARLPKLYLCEFCLKYMKSKNILLRHSKKCGWFHPPANEIYRRKDLSVFEVDGNMSKIYCQNLCLLAKLFLDHKTLYYDVEPFLFYVLTKNDEKGCHLVGYFSKEKLCQQKYNVSCIMIMPQHQRQGFGRFLIDFSYLLSRREGQAGSPEKPLSDLGRLSYLAYWKSVILEYLYHHHERHISIKAISRATGMCPHDIATTLQHLHMIDKRDGGFVIIRREKLILSHMEKLKTCSRANELDPDSLRWTPILISNAAVSEEEREAEKEAERLMEQASCWEKEEQEVLSTRANSRQSPAKVQSKNKYLHSPESRPVTGERGQLLELSKESSEEEEEEEEDEEEEDEEEEEEEEEDEEEEEEEEEEEEEEEEENIQSSPPRLTKPQSVAIKRKRPFVLKKKRGRKRRRINSSVTTETISETTEVLNEPFDNSDEERPMPQLEPTCEIEVEEDGRKPVLRKAFQHQPGKKRQTEEEEGKDNHCFKNADPCRNNMNDDSRNLKEGSKDNPEPLKCKQAWPKGTKRGLSKWRQNKERKTGFKLNLYTPPETPLEPDEQVTVEEQKETSEGKTSPTPISIEEEAKEAGEALLPQEENRRQETCAPVSPNTSPGEKPEDDLIKPEEEEEEEEEEEEEEGEEEEEEGGNVEKDPDGAKSQEKEEPEISPEKEDSARLDDHEEEEEEDEEPSHNEDHDADDEDDSHMESAEVEKEELPRESFKEVLENEEAFLDLNVQPSHSNPEVLMDCGVDLTASCNSEPKELAGDPEAVPESDEEPPPGEQAQKQDQKNSKEVDTEFKEGNPATMEIDSETVQAVQSLTQESSEQDDTFQDCAETQEACRSLQNYTRADQSPQIATTLDDCQQSDHSSPVSSVHSHPGQSVRSVNSPSVPALENSYAQISPDQSAISVPSLQNMETSPMMDVPSVSDHSQQVVDSGFSDLGSIESTTENYENPSSYDSTMGGSICGNGSSQNSCSYSNLTSSSLTQSSCAVTQQMSNISGSCSMLQQTSISSPPTCSVKSPQGCVVERPPSSSQQLAQCSMAANFTPPMQLAEIPETGNANIGLYERMGQSDFGAGHYPQPSATFSLAKLQQLTNTLIDHSLPYSHSAAVTSYANSASLSTPLSNTGLVQLSQSPHSVPGGPQAQATMTPPPNLTPPPMNLPPPLLQRNMAASNIGISHSQRLQTQIASKGHVSMRTKSASLSPAAATHQSQIYGRSQTVAMQGPARTLTMQRGMNMSVNLMPAPAYNVNSVNMNMNTLNAMNGYSMSQPMMNSGYHSNHGYMNQTPQYPMQMQMGMMGTQPYAQQPMQTPPHGNMMYTAPGHHGYMNTGMSKQSLNGSYMRR.

One can recognise an SAMD1-like winged helix (WH) domain in the interval 1-77; the sequence is MVKLANPLYT…LASYKDPDNP (77 aa). Residues 72–98 are disordered; that stretch reads KDPDNPGRFSSVKPGTFPKSTKESRGS. The H15 domain occupies 103 to 176; it reads RNVDWNKLLR…KDGPQYRVNY (74 aa). 2 PHD-type zinc fingers span residues 213-272 and 269-320; these read IPIC…CKTC and CKTC…CRPK. At Ser355 the chain carries Phosphoserine. The tract at residues 361–425 is negatively regulates HAT activity; sequence GSMNAFTGRG…ECESGVEDCG (65 aa). Lys381 is covalently cross-linked (Glycyl lysine isopeptide (Lys-Gly) (interchain with G-Cter in SUMO2)). An MYST-type HAT domain is found at 423–697; it reads DCGRYPSVIE…LDPDSLRWTP (275 aa). The catalytic stretch occupies residues 426–716; sequence RYPSVIEFGK…EEEREAEKEA (291 aa). The segment at 456-481 adopts a C2HC MYST-type zinc-finger fold; it reads LYLCEFCLKYMKSKNILLRHSKKCGW. The segment at 460–716 is interaction with BRPF1; it reads EFCLKYMKSK…EEEREAEKEA (257 aa). Lys523 is modified (N6-acetyllysine; by autocatalysis). Acetyl-CoA contacts are provided by residues 564-568 and 573-579; these read SCIMI and QRQGFGR. Residue Glu599 is the Proton donor/acceptor of the active site. Residue Ser603 coordinates acetyl-CoA. Disordered stretches follow at residues 730-884, 904-1163, 1195-1273, and 1291-1330; these read EQEV…RPMP, RKAF…FKEV, SCNS…FQDC, and QSPQIATTLDDCQQSDHSSPVSSVHSHPGQSVRSVNSPSV. Polar residues predominate over residues 733–751; that stretch reads VLSTRANSRQSPAKVQSKN. N6-acetyllysine occurs at positions 746, 750, and 752. Ser756 is modified (phosphoserine). The span at 777 to 819 shows a compositional bias: acidic residues; it reads SEEEEEEEEDEEEEDEEEEEEEEEDEEEEEEEEEEEEEEEEEN. A compositionally biased stretch (polar residues) spans 820–831; that stretch reads IQSSPPRLTKPQ. Residues 835 to 854 show a composition bias toward basic residues; that stretch reads IKRKRPFVLKKKRGRKRRRI. The segment covering 856–869 has biased composition (low complexity); that stretch reads SSVTTETISETTEV. Residues 904–914 show a composition bias toward basic residues; sequence RKAFQHQPGKK. Basic and acidic residues-rich tracts occupy residues 938-957 and 1055-1064; these read MNDDSRNLKEGSKDNPEPLK and EKPEDDLIKP. The segment covering 1065–1087 has biased composition (acidic residues); that stretch reads EEEEEEEEEEEEEEGEEEEEEGG. Basic and acidic residues-rich tracts occupy residues 1088 to 1101 and 1107 to 1118; these read NVEKDPDGAKSQEK and SPEKEDSARLDD. The span at 1119 to 1128 shows a compositional bias: acidic residues; it reads HEEEEEEDEE. Basic and acidic residues predominate over residues 1144–1163; it reads HMESAEVEKEELPRESFKEV. Residues 1209–1218 show a composition bias toward acidic residues; it reads AVPESDEEPP. The segment covering 1224–1240 has biased composition (basic and acidic residues); the sequence is QKQDQKNSKEVDTEFKE. Polar residues-rich tracts occupy residues 1251–1263 and 1291–1302; these read ETVQAVQSLTQES and QSPQIATTLDDC. Positions 1271–1784 are interaction with RUNX1 and RUNX2; sequence QDCAETQEAC…QSLNGSYMRR (514 aa). The segment covering 1305–1322 has biased composition (low complexity); it reads SDHSSPVSSVHSHPGQSV.

Belongs to the MYST (SAS/MOZ) family. As to quaternary structure, component of the MOZ/MORF complex composed at least of ING5, KAT6A, KAT6B, MEAF6 and one of BRPF1, BRD1/BRPF2 and BRPF3. Interacts with RUNX1 and RUNX2. Autoacetylation at Lys-523 is required for proper function.

It is found in the nucleus. It catalyses the reaction L-lysyl-[protein] + acetyl-CoA = N(6)-acetyl-L-lysyl-[protein] + CoA + H(+). Histone acetyltransferase which may be involved in both positive and negative regulation of transcription. Required for RUNX2-dependent transcriptional activation. May be involved in cerebral cortex development. Component of the MOZ/MORF complex which has a histone H3 acetyltransferase activity. The protein is Histone acetyltransferase KAT6B (KAT6B) of Macaca fascicularis (Crab-eating macaque).